Consider the following 483-residue polypeptide: Rhamnulokinase (483 aa).

11–15 (ASSGR) serves as a coordination point for ATP. Substrate is bound by residues Gly-79 and 234 to 236 (HDT). Residue Asp-235 is the Proton acceptor of the active site. Position 257 (Thr-257) interacts with ATP. Asn-294 is a binding site for substrate. Gln-302 is an ATP binding site. An intrachain disulfide couples Cys-352 to Cys-369. ATP is bound at residue Gly-401.

Belongs to the rhamnulokinase family. The cofactor is Mg(2+).

The enzyme catalyses L-rhamnulose + ATP = L-rhamnulose 1-phosphate + ADP + H(+). The protein operates within carbohydrate degradation; L-rhamnose degradation; glycerone phosphate from L-rhamnose: step 2/3. In terms of biological role, involved in the catabolism of L-rhamnose (6-deoxy-L-mannose). Catalyzes the transfer of the gamma-phosphate group from ATP to the 1-hydroxyl group of L-rhamnulose to yield L-rhamnulose 1-phosphate. The chain is Rhamnulokinase from Listeria innocua serovar 6a (strain ATCC BAA-680 / CLIP 11262).